Reading from the N-terminus, the 150-residue chain is 3-hydroxyacyl-[acyl-carrier-protein] dehydratase FabZ (150 aa).

Histidine 54 is an active-site residue.

The protein belongs to the thioester dehydratase family. FabZ subfamily.

It localises to the cytoplasm. It catalyses the reaction a (3R)-hydroxyacyl-[ACP] = a (2E)-enoyl-[ACP] + H2O. Its function is as follows. Involved in unsaturated fatty acids biosynthesis. Catalyzes the dehydration of short chain beta-hydroxyacyl-ACPs and long chain saturated and unsaturated beta-hydroxyacyl-ACPs. The polypeptide is 3-hydroxyacyl-[acyl-carrier-protein] dehydratase FabZ (Vibrio atlanticus (strain LGP32) (Vibrio splendidus (strain Mel32))).